Here is a 206-residue protein sequence, read N- to C-terminus: Dihydrofolate reductase (206 aa).

Residues 6-204 (SLTLIVALTT…FDYEFEMWTR (199 aa)) enclose the DHFR domain. Residues A12 and 18 to 24 (GIGRSNS) each bind NADP(+). 32–37 (EISYFK) serves as a coordination point for substrate. 59 to 61 (RKT) is an NADP(+) binding site. R75 lines the substrate pocket. NADP(+) contacts are provided by residues 81 to 83 (TRN) and 124 to 131 (GGAQLYKA).

This sequence belongs to the dihydrofolate reductase family.

The catalysed reaction is (6S)-5,6,7,8-tetrahydrofolate + NADP(+) = 7,8-dihydrofolate + NADPH + H(+). It participates in cofactor biosynthesis; tetrahydrofolate biosynthesis; 5,6,7,8-tetrahydrofolate from 7,8-dihydrofolate: step 1/1. Functionally, key enzyme in folate metabolism. Catalyzes an essential reaction for de novo glycine and purine synthesis, and for DNA precursor synthesis. This chain is Dihydrofolate reductase, found in Pneumocystis carinii.